The following is a 110-amino-acid chain: U1-lycotoxin-Ls1ii (110 aa).

The first 20 residues, 1–20 (MKFVLLFGVLLVTLFSYSSA), serve as a signal peptide directing secretion. A propeptide spanning residues 21–44 (EMLDDFDQADEDELLSLIEKEEAR) is cleaved from the precursor. 4 disulfides stabilise this stretch: cysteine 47–cysteine 62, cysteine 54–cysteine 71, cysteine 61–cysteine 89, and cysteine 73–cysteine 87.

It belongs to the neurotoxin 19 (CSTX) family. 03 subfamily. Expressed by the venom gland.

It localises to the secreted. In Lycosa singoriensis (Wolf spider), this protein is U1-lycotoxin-Ls1ii.